The primary structure comprises 189 residues: DnaJ homolog subfamily C member 5G (189 aa).

A J domain is found at 17-98; sequence SLYAVLDLKK…KKRKIYDQHG (82 aa). Residues 154-189 form a disordered region; sequence PEQDSGRKYQQNVQSQPPRSGAKCDFRSEENSEDDF. Over residues 161–171 the composition is skewed to polar residues; that stretch reads KYQQNVQSQPP.

Palmitoylated. As to expression, testis specific.

The protein resides in the membrane. In Homo sapiens (Human), this protein is DnaJ homolog subfamily C member 5G (DNAJC5G).